Here is a 123-residue protein sequence, read N- to C-terminus: Small ribosomal subunit protein uS13 (123 aa).

The tract at residues 89–123 (GRRHRSGLPVRGQRTRTNARTRKGKRKAVAKKKAK) is disordered. The segment covering 101-123 (QRTRTNARTRKGKRKAVAKKKAK) has biased composition (basic residues).

Belongs to the universal ribosomal protein uS13 family. In terms of assembly, part of the 30S ribosomal subunit. Forms a loose heterodimer with protein S19. Forms two bridges to the 50S subunit in the 70S ribosome.

Its function is as follows. Located at the top of the head of the 30S subunit, it contacts several helices of the 16S rRNA. In the 70S ribosome it contacts the 23S rRNA (bridge B1a) and protein L5 of the 50S subunit (bridge B1b), connecting the 2 subunits; these bridges are implicated in subunit movement. Contacts the tRNAs in the A and P-sites. This Cutibacterium acnes (strain DSM 16379 / KPA171202) (Propionibacterium acnes) protein is Small ribosomal subunit protein uS13.